Here is a 202-residue protein sequence, read N- to C-terminus: Small ribosomal subunit protein uS4c (202 aa).

Positions 18–45 are disordered; sequence LPGLTRKMAKRKSPPGQHGAASKKPSQY. One can recognise an S4 RNA-binding domain in the interval 90–152; sequence MRLDTTIFRL…SRSRKLIEGY (63 aa).

This sequence belongs to the universal ribosomal protein uS4 family. Part of the 30S ribosomal subunit. Contacts protein S5. The interaction surface between S4 and S5 is involved in control of translational fidelity.

The protein resides in the plastid. The protein localises to the chloroplast. Functionally, one of the primary rRNA binding proteins, it binds directly to 16S rRNA where it nucleates assembly of the body of the 30S subunit. In terms of biological role, with S5 and S12 plays an important role in translational accuracy. The protein is Small ribosomal subunit protein uS4c (rps4) of Nephroselmis olivacea (Green alga).